An 84-amino-acid chain; its full sequence is UPF0457 protein BT9727_2307 (84 aa).

The protein belongs to the UPF0457 family.

This Bacillus thuringiensis subsp. konkukian (strain 97-27) protein is UPF0457 protein BT9727_2307.